The sequence spans 343 residues: Methylthioribose-1-phosphate isomerase (343 aa).

Substrate-binding positions include 44–46 (RGA), R85, and Q192. Residue D233 is the Proton donor of the active site. Position 243-244 (243-244 (NK)) interacts with substrate.

It belongs to the eIF-2B alpha/beta/delta subunits family. MtnA subfamily.

It carries out the reaction 5-(methylsulfanyl)-alpha-D-ribose 1-phosphate = 5-(methylsulfanyl)-D-ribulose 1-phosphate. It functions in the pathway amino-acid biosynthesis; L-methionine biosynthesis via salvage pathway; L-methionine from S-methyl-5-thio-alpha-D-ribose 1-phosphate: step 1/6. Its function is as follows. Catalyzes the interconversion of methylthioribose-1-phosphate (MTR-1-P) into methylthioribulose-1-phosphate (MTRu-1-P). In Carboxydothermus hydrogenoformans (strain ATCC BAA-161 / DSM 6008 / Z-2901), this protein is Methylthioribose-1-phosphate isomerase.